Consider the following 689-residue polypeptide: Glycine--tRNA ligase beta subunit (689 aa).

It belongs to the class-II aminoacyl-tRNA synthetase family. Tetramer of two alpha and two beta subunits.

It localises to the cytoplasm. The catalysed reaction is tRNA(Gly) + glycine + ATP = glycyl-tRNA(Gly) + AMP + diphosphate. This chain is Glycine--tRNA ligase beta subunit, found in Escherichia coli O7:K1 (strain IAI39 / ExPEC).